A 411-amino-acid chain; its full sequence is Multifunctional CCA protein (411 aa).

Residues Gly8 and Arg11 each coordinate ATP. 2 residues coordinate CTP: Gly8 and Arg11. The Mg(2+) site is built by Asp21 and Asp23. 3 residues coordinate ATP: Arg91, Arg137, and Arg140. Arg91, Arg137, and Arg140 together coordinate CTP. The HD domain maps to 228 to 333 (SGVHTLLVIE…LKVFNALDIW (106 aa)).

It belongs to the tRNA nucleotidyltransferase/poly(A) polymerase family. Bacterial CCA-adding enzyme type 1 subfamily. In terms of assembly, monomer. Can also form homodimers and oligomers. Mg(2+) is required as a cofactor. Requires Ni(2+) as cofactor.

It catalyses the reaction a tRNA precursor + 2 CTP + ATP = a tRNA with a 3' CCA end + 3 diphosphate. The catalysed reaction is a tRNA with a 3' CCA end + 2 CTP + ATP = a tRNA with a 3' CCACCA end + 3 diphosphate. Functionally, catalyzes the addition and repair of the essential 3'-terminal CCA sequence in tRNAs without using a nucleic acid template. Adds these three nucleotides in the order of C, C, and A to the tRNA nucleotide-73, using CTP and ATP as substrates and producing inorganic pyrophosphate. tRNA 3'-terminal CCA addition is required both for tRNA processing and repair. Also involved in tRNA surveillance by mediating tandem CCA addition to generate a CCACCA at the 3' terminus of unstable tRNAs. While stable tRNAs receive only 3'-terminal CCA, unstable tRNAs are marked with CCACCA and rapidly degraded. This is Multifunctional CCA protein from Actinobacillus pleuropneumoniae serotype 5b (strain L20).